The chain runs to 421 residues: Gamma-glutamyl phosphate reductase (421 aa).

Belongs to the gamma-glutamyl phosphate reductase family.

Its subcellular location is the cytoplasm. The enzyme catalyses L-glutamate 5-semialdehyde + phosphate + NADP(+) = L-glutamyl 5-phosphate + NADPH + H(+). The protein operates within amino-acid biosynthesis; L-proline biosynthesis; L-glutamate 5-semialdehyde from L-glutamate: step 2/2. In terms of biological role, catalyzes the NADPH-dependent reduction of L-glutamate 5-phosphate into L-glutamate 5-semialdehyde and phosphate. The product spontaneously undergoes cyclization to form 1-pyrroline-5-carboxylate. This Dinoroseobacter shibae (strain DSM 16493 / NCIMB 14021 / DFL 12) protein is Gamma-glutamyl phosphate reductase.